The primary structure comprises 156 residues: Small ribosomal subunit protein uS7 (156 aa).

This sequence belongs to the universal ribosomal protein uS7 family. Part of the 30S ribosomal subunit. Contacts proteins S9 and S11.

In terms of biological role, one of the primary rRNA binding proteins, it binds directly to 16S rRNA where it nucleates assembly of the head domain of the 30S subunit. Is located at the subunit interface close to the decoding center, probably blocks exit of the E-site tRNA. The chain is Small ribosomal subunit protein uS7 from Azoarcus sp. (strain BH72).